The sequence spans 316 residues: Pantothenate kinase (316 aa).

95–102 provides a ligand contact to ATP; it reads GSVAVGKS.

Belongs to the prokaryotic pantothenate kinase family.

The protein resides in the cytoplasm. It catalyses the reaction (R)-pantothenate + ATP = (R)-4'-phosphopantothenate + ADP + H(+). It participates in cofactor biosynthesis; coenzyme A biosynthesis; CoA from (R)-pantothenate: step 1/5. This Escherichia coli O17:K52:H18 (strain UMN026 / ExPEC) protein is Pantothenate kinase.